A 355-amino-acid chain; its full sequence is MIGGKKKCIGLIFGGNSNEHEVSISSAKTVFQAFKSEINKERFTIRAFYINKYGDWLDSDSSEKILIDESKNKNTTKKQIFNQEKINFLDGVDFQNVDVWFPLLHGINGEDGSIHGLLRFTKKPLVGCGIIGSALGMDKILMKIIFSNLKIPQVNYLVFQNQDLNDEEVKNKLIHEILKKLNFPVFVKPSNSGSSLGISKVINKSEIIPALEKARGIDPSILIEEGLEVREIECGIIGNSKLLTSEIGEVNYKSDWYDYNSKYHSNNKIIIPAEIDSKISKEIKEIAIKSCRALNIFGFARVDFFLEKSSNKIFLNEINTIPGFTKNSMFPMLWKASGLKIEQLVAKLVDISLDL.

Residues 143–350 (KIIFSNLKIP…IEQLVAKLVD (208 aa)) enclose the ATP-grasp domain. Residue 178 to 233 (LKKLNFPVFVKPSNSGSSLGISKVINKSEIIPALEKARGIDPSILIEEGLEVREIE) coordinates ATP. Mg(2+)-binding residues include aspartate 303, glutamate 317, and asparagine 319.

The protein belongs to the D-alanine--D-alanine ligase family. Mg(2+) is required as a cofactor. Requires Mn(2+) as cofactor.

The protein resides in the cytoplasm. The enzyme catalyses 2 D-alanine + ATP = D-alanyl-D-alanine + ADP + phosphate + H(+). It functions in the pathway cell wall biogenesis; peptidoglycan biosynthesis. In terms of biological role, cell wall formation. This is D-alanine--D-alanine ligase from Prochlorococcus marinus (strain AS9601).